A 136-amino-acid chain; its full sequence is Large ribosomal subunit protein uL16 (136 aa).

Belongs to the universal ribosomal protein uL16 family. Part of the 50S ribosomal subunit.

Its function is as follows. Binds 23S rRNA and is also seen to make contacts with the A and possibly P site tRNAs. In Buchnera aphidicola subsp. Acyrthosiphon pisum (strain 5A), this protein is Large ribosomal subunit protein uL16.